Reading from the N-terminus, the 257-residue chain is Pyridoxine/pyridoxamine 5'-phosphate oxidase (257 aa).

33–36 is a substrate binding site; the sequence is RIKY. Residue 90 to 93 coordinates FMN; it reads RFVL. Lys-95 contributes to the pyridoxal 5'-phosphate binding site. Residues 105–106 and Lys-112 contribute to the FMN site; that span reads YT. Pyridoxal 5'-phosphate-binding residues include Tyr-152, Arg-156, and Ser-160. Residues 169–170 and Trp-216 contribute to the FMN site; that span reads QS. 222-224 is a binding site for substrate; that stretch reads RLH. Position 226 (Arg-226) interacts with FMN.

Belongs to the pyridoxamine 5'-phosphate oxidase family. Homodimer. FMN is required as a cofactor. In terms of tissue distribution, expressed in silk gland and fat body of the larva.

The catalysed reaction is pyridoxamine 5'-phosphate + O2 + H2O = pyridoxal 5'-phosphate + H2O2 + NH4(+). The enzyme catalyses pyridoxine 5'-phosphate + O2 = pyridoxal 5'-phosphate + H2O2. It functions in the pathway cofactor metabolism; pyridoxal 5'-phosphate salvage; pyridoxal 5'-phosphate from pyridoxamine 5'-phosphate: step 1/1. It participates in cofactor metabolism; pyridoxal 5'-phosphate salvage; pyridoxal 5'-phosphate from pyridoxine 5'-phosphate: step 1/1. Functionally, catalyzes the oxidation of either pyridoxine 5'-phosphate (PNP) or pyridoxamine 5'-phosphate (PMP) into pyridoxal 5'-phosphate (PLP). The chain is Pyridoxine/pyridoxamine 5'-phosphate oxidase from Bombyx mori (Silk moth).